An 82-amino-acid chain; its full sequence is Immediate early response 3-interacting protein 1 (82 aa).

2 helical membrane-spanning segments follow: residues 2–22 and 62–82; these read AFTL…IAVL and VMRV…LLFG.

This sequence belongs to the YOS1 family.

The protein localises to the endoplasmic reticulum membrane. Functionally, regulator of endoplasmic reticulum secretion that acts as a key determinant of brain size. Required for secretion of extracellular matrix proteins. Required for correct brain development by depositing sufficient extracellular matrix proteins for tissue integrity and the proliferation of neural progenitors. Acts as a regulator of the unfolded protein response (UPR). In Mus musculus (Mouse), this protein is Immediate early response 3-interacting protein 1.